Here is a 491-residue protein sequence, read N- to C-terminus: Sucrose transport protein SUC9 (491 aa).

A compositionally biased stretch (basic and acidic residues) spans 1 to 12 (MSDIQAKEDAAP). Residues 1-26 (MSDIQAKEDAAPVDRQSSSSVVVPDE) form a disordered region. Topologically, residues 1–33 (MSDIQAKEDAAPVDRQSSSSVVVPDEPSPLRKM) are cytoplasmic. At Ser17 the chain carries Phosphoserine. Residues 34-54 (ISVASIAAGIQFGWALQLSLL) traverse the membrane as a helical segment. Topologically, residues 55–68 (TPYVQLLGVPHKWS) are extracellular. The chain crosses the membrane as a helical span at residues 69 to 89 (SFIWLCGPISGLLVQPTVGYF). Topologically, residues 90–101 (SDRCKSRFGRRR) are cytoplasmic. The helical transmembrane segment at 102–122 (PFIATGALLVALAVILIGFAA) threads the bilayer. Over 123–139 (DFGHTMGDKLDEAVKIR) the chain is Extracellular. Residues 140-160 (AVGFFVVGFWILDVANNTLQG) traverse the membrane as a helical segment. Residues 161–181 (PCRAFLGDLAAGDAKKTRTAN) lie on the Cytoplasmic side of the membrane. The chain crosses the membrane as a helical span at residues 182–202 (AIFSFFMAVGNVLGYAAGSYT). Residues 203 to 224 (NLHKIFPFTVTKACDIYCANLK) are Extracellular-facing. Residues 225–245 (SCFIISITLLIVLTIIALWYV) traverse the membrane as a helical segment. The Cytoplasmic segment spans residues 246-277 (EDKQWSPNADSDNEKTPFFGEIFGAFKVMKRP). The chain crosses the membrane as a helical span at residues 278-298 (MWMLLAVTALNWIAWFPFLLY). The Extracellular portion of the chain corresponds to 299 to 329 (DTDWMGREVYGGDSAGDDKMKKLYNHGIQVG). The chain crosses the membrane as a helical span at residues 330–350 (SLGLMLNSIVLGVMSLVIGVI). Over 351–358 (SKKIGAKR) the chain is Cytoplasmic. Residues 359-379 (LWGAVNIILAVCLAMTVLVTK) traverse the membrane as a helical segment. At 380-406 (KAEEHRKIAGRMALPTNAIRDGALSLF) the chain is on the extracellular side. A helical transmembrane segment spans residues 407 to 427 (AILGIPLAITFSIPFALASII). Over 428 to 443 (SSSSGAGQGLSLGVLN) the chain is Cytoplasmic. Residues 444 to 464 (MAIVIPQMIVSFGVGPIDALF) traverse the membrane as a helical segment. Topologically, residues 465–468 (GGGN) are extracellular. A helical membrane pass occupies residues 469 to 489 (LPGFVVGAIAALISSVVALTV). Residues 490-491 (LP) lie on the Cytoplasmic side of the membrane.

It belongs to the glycoside-pentoside-hexuronide (GPH) cation symporter transporter (TC 2.A.2.4) family. In terms of tissue distribution, widely expressed.

The protein localises to the cell membrane. The enzyme catalyses sucrose(out) + H(+)(out) = sucrose(in) + H(+)(in). It functions in the pathway glycan biosynthesis; sucrose metabolism. Inhibited by protonophores (e.g. carbonyl cyanide m-chlorophenyl-hydrazone (CCCP)) and SH group inhibitors (e.g. p-chloromercuribenzene sulphonic acid (PCMBS)). In terms of biological role, high-affinity sucrose transporter. Responsible for the transport of sucrose into the cell, with the concomitant uptake of protons (symport system). Can also transport a wide range of glucosides, such as helicin, salicin, arbutin, maltose, fraxin, esculin, uranose, alpha-methylglucoside, alpha-phenylglucoside and beta-phenylglucoside. Plays a role in flowering time transition delay. In Arabidopsis thaliana (Mouse-ear cress), this protein is Sucrose transport protein SUC9.